The following is a 598-amino-acid chain: Pantothenate kinase 1 (598 aa).

The disordered stretch occupies residues 32–161 (ARPGDQGKAG…SPGAPVGTSA (130 aa)). Residues 38–49 (GKAGGGSPGWGC) show a composition bias toward gly residues. S215 carries the phosphoserine modification. The short motif at 218 to 235 (KKCRLRRRMDSGRKNRPP) is the Nucleolar localization signal element. The active-site Proton acceptor is E363. Residues S417, S420, and R432 each contribute to the acetyl-CoA site.

Belongs to the type II pantothenate kinase family. Homodimer. Expressed at high levels in brain, heart, kidney, liver, skeletal muscle and testis. In terms of tissue distribution, detected at much lower levels in kidney, liver, brain and testis and not detected in heart or skeletal muscle.

It localises to the cytoplasm. It is found in the nucleus. The protein resides in the nucleolus. The protein localises to the cytosol. Its subcellular location is the cytoplasmic vesicle. It localises to the clathrin-coated vesicle. It is found in the recycling endosome. It catalyses the reaction (R)-pantothenate + ATP = (R)-4'-phosphopantothenate + ADP + H(+). It participates in cofactor biosynthesis; coenzyme A biosynthesis; CoA from (R)-pantothenate: step 1/5. Regulated by feedback inhibition by CoA and its thioesters. Its function is as follows. Catalyzes the phosphorylation of pantothenate to generate 4'-phosphopantothenate in the first and rate-determining step of coenzyme A (CoA) synthesis. The polypeptide is Pantothenate kinase 1 (PANK1) (Homo sapiens (Human)).